A 188-amino-acid chain; its full sequence is MAIVSTSEFKNGLKVMLDGDPCTMLESEFVKPGKGQAFNRVKLRNLKTGRVVERTFKSGETLETADVVDVEMQYLYNDGELWHFMVPESFEQYAADQNAVADAKKWLKEQDICILTLFNNVPLAVQPPNFVELTITETDPGVRGDTSGGGGKPATLETGAVVRVPLFVQTGEVIKVDTRTGEYVSRVK.

At K34 the chain carries N6-(3,6-diaminohexanoyl)-5-hydroxylysine.

The protein belongs to the elongation factor P family. May be beta-lysylated on the epsilon-amino group of Lys-34 by the combined action of EpmA and EpmB, and then hydroxylated on the C5 position of the same residue by EpmC (if this protein is present). Lysylation is critical for the stimulatory effect of EF-P on peptide-bond formation. The lysylation moiety may extend toward the peptidyltransferase center and stabilize the terminal 3-CCA end of the tRNA. Hydroxylation of the C5 position on Lys-34 may allow additional potential stabilizing hydrogen-bond interactions with the P-tRNA.

It localises to the cytoplasm. It functions in the pathway protein biosynthesis; polypeptide chain elongation. Involved in peptide bond synthesis. Alleviates ribosome stalling that occurs when 3 or more consecutive Pro residues or the sequence PPG is present in a protein, possibly by augmenting the peptidyl transferase activity of the ribosome. Modification of Lys-34 is required for alleviation. This is Elongation factor P from Methylococcus capsulatus (strain ATCC 33009 / NCIMB 11132 / Bath).